Consider the following 688-residue polypeptide: Elongation factor G (688 aa).

The 275-residue stretch at 8–282 (EKTRNIGIIA…AIVDYLPAPC (275 aa)) folds into the tr-type G domain. GTP is bound by residues 17-24 (AHIDAGKT), 81-85 (DTPGH), and 135-138 (NKMD).

The protein belongs to the TRAFAC class translation factor GTPase superfamily. Classic translation factor GTPase family. EF-G/EF-2 subfamily.

It is found in the cytoplasm. In terms of biological role, catalyzes the GTP-dependent ribosomal translocation step during translation elongation. During this step, the ribosome changes from the pre-translocational (PRE) to the post-translocational (POST) state as the newly formed A-site-bound peptidyl-tRNA and P-site-bound deacylated tRNA move to the P and E sites, respectively. Catalyzes the coordinated movement of the two tRNA molecules, the mRNA and conformational changes in the ribosome. The polypeptide is Elongation factor G (Onion yellows phytoplasma (strain OY-M)).